The chain runs to 331 residues: Major outer membrane protein P.IB (331 aa).

Positions Met-1–Ala-19 are cleaved as a signal peptide.

It belongs to the Gram-negative porin family. Homotrimer.

Its subcellular location is the cell outer membrane. Serves as a slightly cation selective porin. The sequence is that of Major outer membrane protein P.IB (porB) from Neisseria meningitidis serogroup B.